The chain runs to 392 residues: Heat-inducible transcription repressor HrcA (392 aa).

The protein belongs to the HrcA family.

Its function is as follows. Negative regulator of class I heat shock genes (grpE-dnaK-dnaJ and groELS operons). Prevents heat-shock induction of these operons. This is Heat-inducible transcription repressor HrcA from Chlamydia muridarum (strain MoPn / Nigg).